Reading from the N-terminus, the 215-residue chain is Cytochrome b6 (215 aa).

A helical transmembrane segment spans residues 32-52; it reads IFYCLGGVTLVCFIIQFATGF. Cys35 contacts heme c. His86 and His100 together coordinate heme b. The next 3 helical transmembrane spans lie at 90-110, 116-136, and 186-206; these read ASMM…TGGF, LTWI…VTGY, and LHTF…FLMI. His187 and His202 together coordinate heme b.

Belongs to the cytochrome b family. PetB subfamily. In terms of assembly, the 4 large subunits of the cytochrome b6-f complex are cytochrome b6, subunit IV (17 kDa polypeptide, PetD), cytochrome f and the Rieske protein, while the 4 small subunits are PetG, PetL, PetM and PetN. The complex functions as a dimer. It depends on heme b as a cofactor. Heme c is required as a cofactor.

Its subcellular location is the cellular thylakoid membrane. Functionally, component of the cytochrome b6-f complex, which mediates electron transfer between photosystem II (PSII) and photosystem I (PSI), cyclic electron flow around PSI, and state transitions. This Acaryochloris marina (strain MBIC 11017) protein is Cytochrome b6.